Reading from the N-terminus, the 279-residue chain is MPIKTFRPYTPSRRTITVADFSEITTKTPEKRLVKGLRKTGGRNNTGMIMVRHIGGGHKRAYRQIDFKREKYGVPAKVATIEYDPNRNARICLLHYADGDKRYIIHPVGLKIGDEVMSGPNAEIKVGNCLPLKNIPEGTFIHALELKVGKGAQLVRSAGSQAQLMAKENDYAHVKMPSGEIRLVPIACCASIGQVGNVEHNNIVIGNAGRKRHRGVKPTVRGSAMNAVDHPMGGGRGHSKGGNIPRSPWNQPSRGLKTRPKKSWDWMIVSDRRKNKAGK.

The disordered stretch occupies residues A224–K279.

This sequence belongs to the universal ribosomal protein uL2 family. In terms of assembly, part of the 50S ribosomal subunit. Forms a bridge to the 30S subunit in the 70S ribosome.

One of the primary rRNA binding proteins. Required for association of the 30S and 50S subunits to form the 70S ribosome, for tRNA binding and peptide bond formation. It has been suggested to have peptidyltransferase activity; this is somewhat controversial. Makes several contacts with the 16S rRNA in the 70S ribosome. The chain is Large ribosomal subunit protein uL2 from Elusimicrobium minutum (strain Pei191).